Reading from the N-terminus, the 173-residue chain is Shikimate kinase (173 aa).

14–19 (GAGKST) is a binding site for ATP. Mg(2+) is bound at residue S18. Substrate contacts are provided by D36, R60, and G82. R120 is an ATP binding site. Substrate is bound at residue R140. Residue Q157 coordinates ATP.

This sequence belongs to the shikimate kinase family. As to quaternary structure, monomer. The cofactor is Mg(2+).

The protein resides in the cytoplasm. It carries out the reaction shikimate + ATP = 3-phosphoshikimate + ADP + H(+). It functions in the pathway metabolic intermediate biosynthesis; chorismate biosynthesis; chorismate from D-erythrose 4-phosphate and phosphoenolpyruvate: step 5/7. Catalyzes the specific phosphorylation of the 3-hydroxyl group of shikimic acid using ATP as a cosubstrate. This chain is Shikimate kinase, found in Buchnera aphidicola subsp. Schizaphis graminum (strain Sg).